We begin with the raw amino-acid sequence, 478 residues long: UDP-N-acetylmuramate--L-alanine ligase (478 aa).

112–118 serves as a coordination point for ATP; sequence GTHGKTT.

The protein belongs to the MurCDEF family.

It localises to the cytoplasm. It catalyses the reaction UDP-N-acetyl-alpha-D-muramate + L-alanine + ATP = UDP-N-acetyl-alpha-D-muramoyl-L-alanine + ADP + phosphate + H(+). Its pathway is cell wall biogenesis; peptidoglycan biosynthesis. Cell wall formation. This Polynucleobacter asymbioticus (strain DSM 18221 / CIP 109841 / QLW-P1DMWA-1) (Polynucleobacter necessarius subsp. asymbioticus) protein is UDP-N-acetylmuramate--L-alanine ligase.